The primary structure comprises 96 residues: Co-chaperonin GroES (96 aa).

The protein belongs to the GroES chaperonin family. Heptamer of 7 subunits arranged in a ring. Interacts with the chaperonin GroEL.

The protein resides in the cytoplasm. In terms of biological role, together with the chaperonin GroEL, plays an essential role in assisting protein folding. The GroEL-GroES system forms a nano-cage that allows encapsulation of the non-native substrate proteins and provides a physical environment optimized to promote and accelerate protein folding. GroES binds to the apical surface of the GroEL ring, thereby capping the opening of the GroEL channel. In Thioalkalivibrio sulfidiphilus (strain HL-EbGR7), this protein is Co-chaperonin GroES.